A 148-amino-acid chain; its full sequence is 3-dehydroquinate dehydratase (148 aa).

Catalysis depends on Y23, which acts as the Proton acceptor. The substrate site is built by N75, H81, and D88. Catalysis depends on H101, which acts as the Proton donor. Residues 102–103 (LS) and R112 contribute to the substrate site.

Belongs to the type-II 3-dehydroquinase family. As to quaternary structure, homododecamer.

It catalyses the reaction 3-dehydroquinate = 3-dehydroshikimate + H2O. The protein operates within metabolic intermediate biosynthesis; chorismate biosynthesis; chorismate from D-erythrose 4-phosphate and phosphoenolpyruvate: step 3/7. Catalyzes a trans-dehydration via an enolate intermediate. The polypeptide is 3-dehydroquinate dehydratase (Xylella fastidiosa (strain 9a5c)).